Consider the following 922-residue polypeptide: Phosphoenolpyruvate carboxylase (922 aa).

A disordered region spans residues 1 to 20 (MTKTLHARPSAATDTTFAPP). Catalysis depends on residues His-142 and Lys-581.

It belongs to the PEPCase type 1 family. Mg(2+) is required as a cofactor.

It carries out the reaction oxaloacetate + phosphate = phosphoenolpyruvate + hydrogencarbonate. Forms oxaloacetate, a four-carbon dicarboxylic acid source for the tricarboxylic acid cycle. The chain is Phosphoenolpyruvate carboxylase (ppc) from Methylorubrum extorquens (strain ATCC 14718 / DSM 1338 / JCM 2805 / NCIMB 9133 / AM1) (Methylobacterium extorquens).